A 352-amino-acid chain; its full sequence is DNA-directed RNA polymerase subunit alpha (352 aa).

The alpha N-terminal domain (alpha-NTD) stretch occupies residues 1 to 226 (MLISQRPTLT…ELFGLARELN (226 aa)). Residues 243–352 (HIASFGLPIE…EQDYAETEQL (110 aa)) are alpha C-terminal domain (alpha-CTD). Residues 324–352 (DASTGTWSDSGTFSDNDGGEQDYAETEQL) form a disordered region. Residues 326–338 (STGTWSDSGTFSD) are compositionally biased toward polar residues. Residues 340–352 (DGGEQDYAETEQL) show a composition bias toward acidic residues.

Belongs to the RNA polymerase alpha chain family. In terms of assembly, homodimer. The RNAP catalytic core consists of 2 alpha, 1 beta, 1 beta' and 1 omega subunit. When a sigma factor is associated with the core the holoenzyme is formed, which can initiate transcription.

The enzyme catalyses RNA(n) + a ribonucleoside 5'-triphosphate = RNA(n+1) + diphosphate. DNA-dependent RNA polymerase catalyzes the transcription of DNA into RNA using the four ribonucleoside triphosphates as substrates. The polypeptide is DNA-directed RNA polymerase subunit alpha (Nocardia farcinica (strain IFM 10152)).